Consider the following 888-residue polypeptide: Valine--tRNA ligase (888 aa).

The short motif at 43-53 is the 'HIGH' region element; the sequence is PFTSGTLHLGH. The 'KMSKS' region signature appears at 534 to 538; it reads KMSKS. Position 537 (K537) interacts with ATP.

Belongs to the class-I aminoacyl-tRNA synthetase family. ValS type 2 subfamily.

It localises to the cytoplasm. It carries out the reaction tRNA(Val) + L-valine + ATP = L-valyl-tRNA(Val) + AMP + diphosphate. In terms of biological role, catalyzes the attachment of valine to tRNA(Val). As ValRS can inadvertently accommodate and process structurally similar amino acids such as threonine, to avoid such errors, it has a 'posttransfer' editing activity that hydrolyzes mischarged Thr-tRNA(Val) in a tRNA-dependent manner. The chain is Valine--tRNA ligase from Thermococcus kodakarensis (strain ATCC BAA-918 / JCM 12380 / KOD1) (Pyrococcus kodakaraensis (strain KOD1)).